The primary structure comprises 55 residues: Serine protease inhibitor Kazal-type 1 (55 aa).

A Kazal-like domain is found at 2–55 (QGRDANCNYEFPGCPRNLEPVCGTDGNTYNNECLLCMENKKRDVPIRIQKDGPC). Disulfide bonds link Cys8–Cys37, Cys15–Cys34, and Cys23–Cys55.

The protein resides in the secreted. In terms of biological role, serine protease inhibitor which exhibits anti-trypsin activity. In the pancreas, protects against trypsin-catalyzed premature activation of zymogens. Its function is as follows. In the male reproductive tract, binds to sperm heads where it modulates sperm capacitance by inhibiting calcium uptake and nitrogen oxide (NO) production. The sequence is that of Serine protease inhibitor Kazal-type 1 (SPINK1) from Monodelphis domestica (Gray short-tailed opossum).